The following is a 661-amino-acid chain: MELKKDINAVSIDMLLIVHSEKRRAAQGTLSDQQANPSSLLQRGGGFQGVGNGVRRWQKLEGNDFHENLVEKQHPQQPQVITSYNSQGTQLTVEVHPRDAMPQLLKKFSLAKRLQGDKNGNTRPRQPGGKDAHAYPWDRSSLKSMSLDLQQFEKLDIYASQVTAKSGLDELVSDLLQEAHTDLERVRAIWIWICHHIEYDIAAAQEKDRQAFKPTDILRTQKTNCDGYAGLFERMCRLAGVQCMTVPGYSKGFGYQTGQSFSGEFDHAWNAVYLEGRWHLVDSTWGSGLVDTITSKFTFLYNEFYFLTHPALFIEDHFPDNKNWQLLKPPQSLRQFENNMYHKSEFYNKGMLSAHPETSMIRTVNGKATVTIESCAPTLFMFMLNGKQEHGLLSLRKNGMKLEVYPPTMGTHKLQIFAKGNSDIYSSVLEYTLKCNYVDMGVQLPAELHQPVGPSWFSEQMGIMKPSHPDPIIHTSDGRCSISFSVEEGINVLASLHGDDGPITEETQRRYIFQLHREKQTELKVQLPHAGKFALKIFVKKRQEPGNYIFVFNYLVCCANTKVNWPMFPESFGNWGQDNELLEPLSGVLPANRNVPFKLKLHGIAKVLVKGQDTWPLTLNHEGYWEGSCSTAGCQEVYVMVLENANHNFYSYILKYKVNAQ.

Positions glycine 28–leucine 41 are enriched in polar residues. Disordered stretches follow at residues glycine 28 to phenylalanine 47 and glutamine 115 to proline 136. Residues cysteine 225, histidine 267, and aspartate 282 contribute to the active site.

It belongs to the transglutaminase-like superfamily. As to quaternary structure, interacts with IGFN1 and FLNC. In terms of tissue distribution, highly expressed in skeletal muscle.

It localises to the cytoplasm. It is found in the cytoskeleton. The protein resides in the myofibril. The protein localises to the sarcomere. Its subcellular location is the z line. Its function is as follows. Probable cytoskeleton-associated protease required for normal muscle growth. Involved in function, maturation and stabilization of the neuromuscular junction. May act by cleaving muscle-specific proteins such as FLNC. This chain is Kyphoscoliosis peptidase, found in Homo sapiens (Human).